Reading from the N-terminus, the 798-residue chain is Phenylalanine--tRNA ligase beta subunit (798 aa).

Residues Phe39 to Val148 form the tRNA-binding domain. In terms of domain architecture, B5 spans Trp402 to Pro478. The Mg(2+) site is built by Asp456, Asp462, Glu465, and Glu466. An FDX-ACB domain is found at Pro708–Ile798.

Belongs to the phenylalanyl-tRNA synthetase beta subunit family. Type 1 subfamily. In terms of assembly, tetramer of two alpha and two beta subunits. Mg(2+) is required as a cofactor.

Its subcellular location is the cytoplasm. It carries out the reaction tRNA(Phe) + L-phenylalanine + ATP = L-phenylalanyl-tRNA(Phe) + AMP + diphosphate + H(+). The chain is Phenylalanine--tRNA ligase beta subunit from Nitratidesulfovibrio vulgaris (strain ATCC 29579 / DSM 644 / CCUG 34227 / NCIMB 8303 / VKM B-1760 / Hildenborough) (Desulfovibrio vulgaris).